A 412-amino-acid polypeptide reads, in one-letter code: Multifunctional CCA protein (412 aa).

2 residues coordinate ATP: G8 and R11. Residues G8 and R11 each coordinate CTP. Mg(2+) is bound by residues D21 and D23. Positions 91, 137, and 140 each coordinate ATP. R91, R137, and R140 together coordinate CTP. Residues 228-329 form the HD domain; sequence TGIHTLMTLS…VKLFDSIDAW (102 aa).

It belongs to the tRNA nucleotidyltransferase/poly(A) polymerase family. Bacterial CCA-adding enzyme type 1 subfamily. In terms of assembly, monomer. Can also form homodimers and oligomers. Mg(2+) serves as cofactor. Requires Ni(2+) as cofactor.

It carries out the reaction a tRNA precursor + 2 CTP + ATP = a tRNA with a 3' CCA end + 3 diphosphate. The enzyme catalyses a tRNA with a 3' CCA end + 2 CTP + ATP = a tRNA with a 3' CCACCA end + 3 diphosphate. In terms of biological role, catalyzes the addition and repair of the essential 3'-terminal CCA sequence in tRNAs without using a nucleic acid template. Adds these three nucleotides in the order of C, C, and A to the tRNA nucleotide-73, using CTP and ATP as substrates and producing inorganic pyrophosphate. tRNA 3'-terminal CCA addition is required both for tRNA processing and repair. Also involved in tRNA surveillance by mediating tandem CCA addition to generate a CCACCA at the 3' terminus of unstable tRNAs. While stable tRNAs receive only 3'-terminal CCA, unstable tRNAs are marked with CCACCA and rapidly degraded. The chain is Multifunctional CCA protein from Escherichia coli (strain SMS-3-5 / SECEC).